A 330-amino-acid chain; its full sequence is DNA-directed RNA polymerase subunit alpha (330 aa).

The segment at 1–232 is alpha N-terminal domain (alpha-NTD); sequence MAILAFQKPE…SHFSLFAENK (232 aa). An alpha C-terminal domain (alpha-CTD) region spans residues 248–330; the sequence is EDSLHMRQLL…DISKYKLDKD (83 aa).

The protein belongs to the RNA polymerase alpha chain family. In terms of assembly, homodimer. The RNAP catalytic core consists of 2 alpha, 1 beta, 1 beta' and 1 omega subunit. When a sigma factor is associated with the core the holoenzyme is formed, which can initiate transcription.

The enzyme catalyses RNA(n) + a ribonucleoside 5'-triphosphate = RNA(n+1) + diphosphate. Its function is as follows. DNA-dependent RNA polymerase catalyzes the transcription of DNA into RNA using the four ribonucleoside triphosphates as substrates. The polypeptide is DNA-directed RNA polymerase subunit alpha (Porphyromonas gingivalis (strain ATCC BAA-308 / W83)).